Reading from the N-terminus, the 404-residue chain is Probable thioredoxin reductase ARB_06224 (404 aa).

The signal sequence occupies residues 1–22 (MGVQRLALALIAFTSALTSVIA). Residue 67–75 (DEGIYRNGA) coordinates FAD. The cysteines at positions 172 and 175 are disulfide-linked. N-linked (GlcNAc...) asparagine glycosylation occurs at asparagine 213. 334-343 (DANNDGSTNG) provides a ligand contact to FAD.

It belongs to the class-II pyridine nucleotide-disulfide oxidoreductase family. Homodimer. The cofactor is FAD.

It is found in the secreted. It catalyses the reaction [thioredoxin]-dithiol + NADP(+) = [thioredoxin]-disulfide + NADPH + H(+). This Arthroderma benhamiae (strain ATCC MYA-4681 / CBS 112371) (Trichophyton mentagrophytes) protein is Probable thioredoxin reductase ARB_06224.